The following is a 328-amino-acid chain: Phosphate acyltransferase (328 aa).

It belongs to the PlsX family. As to quaternary structure, homodimer. Probably interacts with PlsY.

The protein localises to the cytoplasm. It catalyses the reaction a fatty acyl-[ACP] + phosphate = an acyl phosphate + holo-[ACP]. It functions in the pathway lipid metabolism; phospholipid metabolism. Functionally, catalyzes the reversible formation of acyl-phosphate (acyl-PO(4)) from acyl-[acyl-carrier-protein] (acyl-ACP). This enzyme utilizes acyl-ACP as fatty acyl donor, but not acyl-CoA. This Campylobacter jejuni subsp. jejuni serotype O:2 (strain ATCC 700819 / NCTC 11168) protein is Phosphate acyltransferase.